The chain runs to 434 residues: Histidinol dehydrogenase (434 aa).

Tyrosine 130, glutamine 188, and asparagine 211 together coordinate NAD(+). Substrate is bound by residues serine 237, glutamine 259, and histidine 262. Glutamine 259 and histidine 262 together coordinate Zn(2+). Active-site proton acceptor residues include glutamate 326 and histidine 327. Residues histidine 327, aspartate 360, glutamate 414, and histidine 419 each contribute to the substrate site. Zn(2+) is bound at residue aspartate 360. Histidine 419 contributes to the Zn(2+) binding site.

Belongs to the histidinol dehydrogenase family. In terms of assembly, homodimer. It depends on Zn(2+) as a cofactor.

The catalysed reaction is L-histidinol + 2 NAD(+) + H2O = L-histidine + 2 NADH + 3 H(+). It functions in the pathway amino-acid biosynthesis; L-histidine biosynthesis; L-histidine from 5-phospho-alpha-D-ribose 1-diphosphate: step 9/9. Functionally, catalyzes the sequential NAD-dependent oxidations of L-histidinol to L-histidinaldehyde and then to L-histidine. The protein is Histidinol dehydrogenase of Shigella boydii serotype 4 (strain Sb227).